The primary structure comprises 252 residues: Phosphate import ATP-binding protein PstB 1 (252 aa).

In terms of domain architecture, ABC transporter spans 6-247 (LQVSDLSVYY…PKHKETEDYI (242 aa)). ATP is bound at residue 38–45 (GPSGSGKS).

Belongs to the ABC transporter superfamily. Phosphate importer (TC 3.A.1.7) family. The complex is composed of two ATP-binding proteins (PstB), two transmembrane proteins (PstC and PstA) and a solute-binding protein (PstS).

It localises to the cell membrane. The catalysed reaction is phosphate(out) + ATP + H2O = ADP + 2 phosphate(in) + H(+). Its function is as follows. Part of the ABC transporter complex PstSACB involved in phosphate import. Responsible for energy coupling to the transport system. The protein is Phosphate import ATP-binding protein PstB 1 of Streptococcus agalactiae serotype Ia (strain ATCC 27591 / A909 / CDC SS700).